An 803-amino-acid polypeptide reads, in one-letter code: Mastermind-like domain-containing protein 1 (803 aa).

Disordered regions lie at residues 22 to 50 (NRQE…TGMA), 292 to 374 (LAAS…APSS), 420 to 452 (GHLI…QQSF), and 486 to 641 (QQQQ…PDQS). Residues 296–309 (KQGSATKQGSNRNW) are compositionally biased toward polar residues. Residues 312 to 340 (LPPPGLSPPYLPVPSPHPPPPQPPPPPFS) are compositionally biased toward pro residues. Positions 347 to 362 (SCMSSSSLSGSAVQSS) are enriched in low complexity. Composition is skewed to polar residues over residues 363–374 (PNALLSSMAPSS), 441–452 (NLSSPGLPQQSF), 495–526 (HQAN…SSSP), and 547–564 (PSPQ…QSSL). Residues 571–588 (ATPAHAPSATASSTATAT) show a composition bias toward low complexity. Residues 592–622 (QHHHQQHHHQQHHHQQQHHQQQHHQQHHHQQ) are compositionally biased toward basic residues. Low complexity predominate over residues 623-641 (QQHQQQQHQQQQQQQPDQS).

It belongs to the mastermind family.

The protein resides in the nucleus. Its function is as follows. Transactivates the HES3 promoter independently of NOTCH proteins. HES3 is a non-canonical NOTCH target gene which lacks binding sites for RBPJ. Required for testosterone production. In Mus musculus (Mouse), this protein is Mastermind-like domain-containing protein 1 (Mamld1).